The following is a 592-amino-acid chain: Frizzled-9 (592 aa).

The signal sequence occupies residues 1–23; it reads MAVPPLLRGALLLWQLLATGGAA. At 24-230 the chain is on the extracellular side; it reads LEIGRFDPER…EVFWSRRDKD (207 aa). Residues 35 to 156 form the FZ domain; the sequence is RGPAPCQAME…NDPHALCMEA (122 aa). Cystine bridges form between C40/C101, C48/C94, C85/C123, C112/C153, and C116/C140. The required for Wnt-activated receptor activity stretch occupies residues 59 to 173; that stretch reads PNLLGHTSQG…PTEPHKGLGM (115 aa). The helical transmembrane segment at 231–251 threads the bilayer; that stretch reads FALVWMAVWSALCFFSTAFTV. Residues 252-267 are Cytoplasmic-facing; the sequence is FTFLLEPHRFQYPERP. Residues 268-288 traverse the membrane as a helical segment; that stretch reads IIFLSMCYNVYSLAFLIRAVA. Residues 289–314 lie on the Extracellular side of the membrane; it reads GAQSVACDQEAGALYVIQEGLENTGC. Residues 315 to 335 form a helical membrane-spanning segment; that stretch reads TLVFLLLYYFGMASSLWWVVL. Topologically, residues 336–356 are cytoplasmic; the sequence is TLTWFLAAGKKWGHEAIEAHG. Residues 357-377 traverse the membrane as a helical segment; sequence SYFHMAAWGLPALKTIVVLTL. Over 378-401 the chain is Extracellular; it reads RKVAGDELTGLCYVASMDPAALTG. Residues 402-422 form a helical membrane-spanning segment; sequence FVLVPLSCYLVLGTSFLLTGF. At 423 to 448 the chain is on the cytoplasmic side; the sequence is VALFHIRKIMKTGGTNTEKLEKLMVK. The helical transmembrane segment at 449–469 threads the bilayer; it reads IGVFSILYTVPATCVIVCYVY. Over 470-509 the chain is Extracellular; the sequence is ERLNMDFWRLRATEQPCTAAAVPGGRRDCSLPGGSVPTVA. A helical membrane pass occupies residues 510 to 530; sequence VFMLKIFMSLVVGITSGVWVW. The Cytoplasmic segment spans residues 531–592; the sequence is SSKTFQTWQS…DPSLENPTHL (62 aa). Positions 533-538 match the Lys-Thr-X-X-X-Trp motif, mediates interaction with the PDZ domain of Dvl family members motif; the sequence is KTFQTW. The required for CTNNB1 accumulation and TCF transcription factor activity stretch occupies residues 555-592; sequence ACRTPGGYGRGTHCHYKAPTVVLHMTKTDPSLENPTHL.

Belongs to the G-protein coupled receptor Fz/Smo family. Post-translationally, ubiquitinated by ZNRF3, leading to its degradation by the proteasome.

It is found in the cell membrane. Receptor for WNT2 that is coupled to the beta-catenin canonical signaling pathway, which leads to the activation of disheveled proteins, inhibition of GSK-3 kinase, nuclear accumulation of beta-catenin and activation of Wnt target genes. Plays a role in neuromuscular junction (NMJ) assembly by negatively regulating the clustering of acetylcholine receptors (AChR) through the beta-catenin canonical signaling pathway. May play a role in neural progenitor cells (NPCs) viability through the beta-catenin canonical signaling pathway by negatively regulating cell cycle arrest leading to inhibition of neuron apoptotic process. During hippocampal development, regulates neuroblast proliferation and apoptotic cell death. Controls bone formation through non canonical Wnt signaling mediated via ISG15. Positively regulates bone regeneration through non canonical Wnt signaling. This is Frizzled-9 from Rattus norvegicus (Rat).